The chain runs to 178 residues: Fibroin heavy chain (178 aa).

An N-terminal signal peptide occupies residues 1–21 (MRVKTFVILCCALQYVAYTNA). The tract at residues 149-178 (AVGAGAGAGAAAGSGAGAGAGYGAASGAGA) is highly repetitive.

Silk fibroin elementary unit consists in a disulfide-linked heavy and light chain and a p25 glycoprotein in molar ratios of 6:6:1. This results in a complex of approximately 2.3 MDa. The interchain disulfide bridge is essential for the intracellular transport and secretion of fibroin. As to expression, produced exclusively in the posterior (PSG) section of silk glands, which are essentially modified salivary glands.

Core component of the silk filament; a strong, insoluble and chemically inert fiber. This is Fibroin heavy chain (FIBH) from Bombyx mandarina (Wild silk moth).